The primary structure comprises 316 residues: Transaldolase (316 aa).

The Schiff-base intermediate with substrate role is filled by lysine 125.

Belongs to the transaldolase family. Type 1 subfamily. As to quaternary structure, homodimer.

Its subcellular location is the cytoplasm. It catalyses the reaction D-sedoheptulose 7-phosphate + D-glyceraldehyde 3-phosphate = D-erythrose 4-phosphate + beta-D-fructose 6-phosphate. Its pathway is carbohydrate degradation; pentose phosphate pathway; D-glyceraldehyde 3-phosphate and beta-D-fructose 6-phosphate from D-ribose 5-phosphate and D-xylulose 5-phosphate (non-oxidative stage): step 2/3. Transaldolase is important for the balance of metabolites in the pentose-phosphate pathway. This chain is Transaldolase, found in Acidovorax sp. (strain JS42).